The following is a 104-amino-acid chain: Nucleoid-associated protein GAU_1113 (104 aa).

Belongs to the YbaB/EbfC family. Homodimer.

It is found in the cytoplasm. The protein resides in the nucleoid. Functionally, binds to DNA and alters its conformation. May be involved in regulation of gene expression, nucleoid organization and DNA protection. This is Nucleoid-associated protein GAU_1113 from Gemmatimonas aurantiaca (strain DSM 14586 / JCM 11422 / NBRC 100505 / T-27).